Reading from the N-terminus, the 376-residue chain is Alpha-2,8-sialyltransferase 8E (376 aa).

Over 1-17 (MRYADPSANRDLLGNRT) the chain is Cytoplasmic. The helical; Signal-anchor for type II membrane protein transmembrane segment at 18–38 (LLFIFICAFALVTLLQQILYG) threads the bilayer. The Lumenal segment spans residues 39–376 (RNYIKRYFEF…RVHTGTCSCC (338 aa)). 2 N-linked (GlcNAc...) asparagine glycosylation sites follow: asparagine 56 and asparagine 96. 2 cysteine pairs are disulfide-bonded: cysteine 164–cysteine 313 and cysteine 178–cysteine 373. Residues asparagine 192 and 214–216 (NPS) each bind substrate. 2 N-linked (GlcNAc...) asparagine glycosylation sites follow: asparagine 241 and asparagine 284. Residue 300–302 (STG) coordinates substrate. The active-site Proton donor/acceptor is the histidine 348.

The protein belongs to the glycosyltransferase 29 family.

The protein localises to the golgi apparatus membrane. It catalyses the reaction a ganglioside GQ1c (d18:1(4E)) + CMP-N-acetyl-beta-neuraminate = a ganglioside GP1c (d18:1(4E)) + CMP + H(+). It functions in the pathway protein modification; protein glycosylation. In terms of biological role, involved in the synthesis of gangliosides GD1c, GT1a, GQ1b, GP1c and GT3 from GD1a, GT1b, GM1b and GD3 respectively. In Pan troglodytes (Chimpanzee), this protein is Alpha-2,8-sialyltransferase 8E (ST8SIA5).